The following is a 420-amino-acid chain: Serine hydroxymethyltransferase (420 aa).

(6S)-5,6,7,8-tetrahydrofolate is bound by residues leucine 121 and 125 to 127 (GHL). Residue lysine 230 is modified to N6-(pyridoxal phosphate)lysine. Residues glutamate 246 and 354–356 (SPF) each bind (6S)-5,6,7,8-tetrahydrofolate.

Belongs to the SHMT family. Homodimer. The cofactor is pyridoxal 5'-phosphate.

The protein localises to the cytoplasm. It catalyses the reaction (6R)-5,10-methylene-5,6,7,8-tetrahydrofolate + glycine + H2O = (6S)-5,6,7,8-tetrahydrofolate + L-serine. It participates in one-carbon metabolism; tetrahydrofolate interconversion. It functions in the pathway amino-acid biosynthesis; glycine biosynthesis; glycine from L-serine: step 1/1. Catalyzes the reversible interconversion of serine and glycine with tetrahydrofolate (THF) serving as the one-carbon carrier. This reaction serves as the major source of one-carbon groups required for the biosynthesis of purines, thymidylate, methionine, and other important biomolecules. Also exhibits THF-independent aldolase activity toward beta-hydroxyamino acids, producing glycine and aldehydes, via a retro-aldol mechanism. The sequence is that of Serine hydroxymethyltransferase from Rickettsia peacockii (strain Rustic).